We begin with the raw amino-acid sequence, 597 residues long: Formate--tetrahydrofolate ligase (597 aa).

84–91 (TPLGEGKS) provides a ligand contact to ATP.

It belongs to the formate--tetrahydrofolate ligase family.

It catalyses the reaction (6S)-5,6,7,8-tetrahydrofolate + formate + ATP = (6R)-10-formyltetrahydrofolate + ADP + phosphate. It participates in one-carbon metabolism; tetrahydrofolate interconversion. The protein is Formate--tetrahydrofolate ligase of Dehalococcoides mccartyi (strain ATCC BAA-2266 / KCTC 15142 / 195) (Dehalococcoides ethenogenes (strain 195)).